The sequence spans 236 residues: Uridylate kinase (236 aa).

11–14 (KFSG) contacts ATP. Glycine 53 serves as a coordination point for UMP. ATP is bound by residues glycine 54 and arginine 58. UMP-binding positions include aspartate 73 and 134–141 (TGSPFFTT). The ATP site is built by threonine 161, tyrosine 167, and aspartate 170.

The protein belongs to the UMP kinase family. Homohexamer.

The protein resides in the cytoplasm. The catalysed reaction is UMP + ATP = UDP + ADP. It participates in pyrimidine metabolism; CTP biosynthesis via de novo pathway; UDP from UMP (UMPK route): step 1/1. Its activity is regulated as follows. Inhibited by UTP. Its function is as follows. Catalyzes the reversible phosphorylation of UMP to UDP. In Hydrogenovibrio crunogenus (strain DSM 25203 / XCL-2) (Thiomicrospira crunogena), this protein is Uridylate kinase.